The primary structure comprises 214 residues: Ras-related protein RABH1c (214 aa).

Residue 16 to 23 (GDQSVGKT) coordinates GTP. An Effector region motif is present at residues 38 to 46 (YQPTIGIDF). Residues 64 to 68 (DTAGQ), 123 to 126 (NKTD), and 153 to 154 (SA) each bind GTP. A disordered region spans residues 194–214 (TSNSSQGEQQGGAGGGGGCSC). Residues 202 to 214 (QQGGAGGGGGCSC) show a composition bias toward gly residues. S-geranylgeranyl cysteine attachment occurs at residues C212 and C214. The residue at position 214 (C214) is a Cysteine methyl ester.

It belongs to the small GTPase superfamily. Rab family. As to quaternary structure, interacts with the C-terminus of GC5, but not with GC3.

Its subcellular location is the golgi apparatus membrane. It is found in the cytoplasm. The protein resides in the cytosol. Functionally, protein transport. Regulator of membrane traffic from the Golgi apparatus towards the endoplasmic reticulum (ER). The chain is Ras-related protein RABH1c (RABH1C) from Arabidopsis thaliana (Mouse-ear cress).